The chain runs to 334 residues: NH(3)-dependent NAD(+) synthetase (334 aa).

Gly47 to Ser54 serves as a coordination point for ATP. Asp53 contacts Mg(2+). A deamido-NAD(+)-binding site is contributed by Arg183. An ATP-binding site is contributed by Thr203. Residue Glu208 participates in Mg(2+) binding. Residues Lys216 and Asp223 each coordinate deamido-NAD(+). Residues Lys232 and Thr254 each coordinate ATP.

This sequence belongs to the NAD synthetase family. In terms of assembly, homodimer.

The catalysed reaction is deamido-NAD(+) + NH4(+) + ATP = AMP + diphosphate + NAD(+) + H(+). The protein operates within cofactor biosynthesis; NAD(+) biosynthesis; NAD(+) from deamido-NAD(+) (ammonia route): step 1/1. Its function is as follows. Catalyzes the ATP-dependent amidation of deamido-NAD to form NAD. Uses ammonia as a nitrogen source. The chain is NH(3)-dependent NAD(+) synthetase from Rhizobium meliloti (strain 1021) (Ensifer meliloti).